Consider the following 256-residue polypeptide: PHD finger protein ALFIN-LIKE 6 (256 aa).

The tract at residues 144–200 (SKDLSVNNNNSKSKPSGVKSRQSESLSKVAKMSSPPPKEEEEEEDESEDESEDDEQG) is disordered. Residues 146 to 163 (DLSVNNNNSKSKPSGVKS) are compositionally biased toward low complexity. Acidic residues predominate over residues 182–199 (EEEEEEDESEDESEDDEQ). The segment at 200-252 (GAVCGACGDNYGTDEFWICCDACEKWFHGKCVKITPAKAEHIKHYKCPTCSNK) adopts a PHD-type zinc-finger fold.

It belongs to the Alfin family. As to quaternary structure, interacts with H3K4me3 and to a lesser extent with H3K4me2. Ubiquitously expressed.

The protein resides in the nucleus. Functionally, histone-binding component that specifically recognizes H3 tails trimethylated on 'Lys-4' (H3K4me3), which mark transcription start sites of virtually all active genes. The protein is PHD finger protein ALFIN-LIKE 6 (AL6) of Arabidopsis thaliana (Mouse-ear cress).